We begin with the raw amino-acid sequence, 233 residues long: MSFLIVANWKMNGTRSLFVNFIGKLNDKSNEITSKLVICPPFTSLPGNIELNSNISIGAQNCHYKKSGSYTGEISAEMLKELGCTYVILGHSERTHETNGEIKLKSETAIESGLHPIICVGENLEDRESSKTKEVVEYQCKSRLPIHGEYTVAYEPIWAIGTGHVPSNNAIAEVIEVIQSYTSKKHVIYGGSVSLENIENLSNILNLSGVLIGSASLDFDRFHKIVQQVEKAY.

8-10 provides a ligand contact to substrate; that stretch reads NWK. Catalysis depends on histidine 91, which acts as the Electrophile. The Proton acceptor role is filled by glutamate 155. Substrate-binding residues include glycine 161 and serine 192.

The protein belongs to the triosephosphate isomerase family. In terms of assembly, homodimer.

It is found in the cytoplasm. The enzyme catalyses D-glyceraldehyde 3-phosphate = dihydroxyacetone phosphate. It participates in carbohydrate biosynthesis; gluconeogenesis. Its pathway is carbohydrate degradation; glycolysis; D-glyceraldehyde 3-phosphate from glycerone phosphate: step 1/1. Its function is as follows. Involved in the gluconeogenesis. Catalyzes stereospecifically the conversion of dihydroxyacetone phosphate (DHAP) to D-glyceraldehyde-3-phosphate (G3P). This is Triosephosphate isomerase from Wolbachia sp. subsp. Brugia malayi (strain TRS).